The following is a 130-amino-acid chain: Protein ApaG (130 aa).

The ApaG domain maps to 3–127 (SEVTRSIRVT…FSLDSPHGRS (125 aa)).

The chain is Protein ApaG from Rhodospirillum centenum (strain ATCC 51521 / SW).